A 573-amino-acid chain; its full sequence is MSNPPHGGVLKDLIARDLPRHAELEAEAETLPALLLSERQLCDLELILNGGFSPLEGFMNQEDYNDVVKENRLASGLLFSMPITLDVSEETISELGLKAGARITLRDFRDDRNLAILTVDDVYKPDKALEAKEVFGGDEEHPAVKFLYETAKEYYVGGKLEAVNKLQHYDFVDLRYSPAEIRTHFDKLGWSRVVAFQTRNPMHRAHRELTVRAARSHHANVLIHPVVGLTKPGDIDHFTRVRVYKALLPRYPNGMAVLGLLPLAMRMGGPREAIWHAIIRKNHGATHFIVGRDHAGPGKNSKGVDFYGPYDAQYAVEKYRDELGIEVVPFQMMTYLPDSDEYAPVDQIPKGVRTLNISGTELRARLRSGREIPEWFSYPEVVKVLRESHPPRSQQGFTVLFTGYPNSGKDQIARALQVTLNQQGGRSVSLFLGENIRHELSSELGYNREDRDKNIARIAFVASELTRSGAAVIAAPIAPFEKARQNARELVEKYGDFYLVHVATPLEYCEKTDKRGIYAKARAGEIENFTGVNDPYETPAKPDLVVDCEKQSVRSIVHQIILLLESQGLLDRF.

Residues 1 to 169 are N-terminal; the sequence is MSNPPHGGVL…LEAVNKLQHY (169 aa). The segment at 170 to 394 is catalytic; that stretch reads DFVDLRYSPA…LRESHPPRSQ (225 aa). A sulfate-binding site is contributed by Gln197. ATP contacts are provided by residues 197 to 200 and 291 to 294; these read QTRN and GRDH. Catalysis depends on residues Thr198, Arg199, and Asn200. Arg199 is a sulfate binding site. Ala295 contributes to the sulfate binding site. Met333 is an ATP binding site. An allosteric regulation domain; adenylyl-sulfate kinase-like region spans residues 395 to 573; the sequence is QGFTVLFTGY…LESQGLLDRF (179 aa). Residues 434–437, Arg451, 477–478, and Arg515 each bind 3'-phosphoadenylyl sulfate; these read ENIR and IA.

This sequence in the N-terminal section; belongs to the sulfate adenylyltransferase family. The protein in the C-terminal section; belongs to the APS kinase family. Homohexamer. Dimer of trimers.

It localises to the cytoplasm. The catalysed reaction is sulfate + ATP + H(+) = adenosine 5'-phosphosulfate + diphosphate. The protein operates within sulfur metabolism; hydrogen sulfide biosynthesis; sulfite from sulfate: step 1/3. Its activity is regulated as follows. Allosterically inhibited by 3'-phosphoadenosine 5'-phosphosulfate (PAPS). In terms of biological role, catalyzes the first intracellular reaction of sulfate assimilation, forming adenosine-5'-phosphosulfate (APS) from inorganic sulfate and ATP. Plays an important role in sulfate activation as a component of the biosynthesis pathway of sulfur-containing amino acids. This Neurospora crassa (strain ATCC 24698 / 74-OR23-1A / CBS 708.71 / DSM 1257 / FGSC 987) protein is Sulfate adenylyltransferase (cys-11).